We begin with the raw amino-acid sequence, 150 residues long: MSTTTEVIAHHWAFAVFLIGAIGLCGLMLLGAFFLGGRARARAKNVPYESGIDSVGSARMRLSAKFYLVAMFFVIFDVEALYLYAWSISIRESGWIGFIEATIFILVLLAGLVYLVRIGALDWTPGRSNRRVSKPSIVKYASSHPDIPKN.

Transmembrane regions (helical) follow at residues 14–34, 66–86, and 96–116; these read FAVFLIGAIGLCGLMLLGAFF, FYLVAMFFVIFDVEALYLYAW, and IGFIEATIFILVLLAGLVYLV.

Belongs to the complex I subunit 3 family. As to quaternary structure, NDH-1 is composed of 13 different subunits. Subunits NuoA, H, J, K, L, M, N constitute the membrane sector of the complex.

It localises to the cell inner membrane. It carries out the reaction a quinone + NADH + 5 H(+)(in) = a quinol + NAD(+) + 4 H(+)(out). In terms of biological role, NDH-1 shuttles electrons from NADH, via FMN and iron-sulfur (Fe-S) centers, to quinones in the respiratory chain. The immediate electron acceptor for the enzyme in this species is believed to be ubiquinone. Couples the redox reaction to proton translocation (for every two electrons transferred, four hydrogen ions are translocated across the cytoplasmic membrane), and thus conserves the redox energy in a proton gradient. The protein is NADH-quinone oxidoreductase subunit A of Yersinia enterocolitica serotype O:8 / biotype 1B (strain NCTC 13174 / 8081).